A 245-amino-acid polypeptide reads, in one-letter code: MKIDLNADLGEGCGDDAALLGLVSSANIACGWHAGDADTMRRTVLLALEKGVAIGAHPGFPDRENFGRSEMRLPMEAARAGLLYQLGALDAIVRAEGGALRHVKPHGALYNQAAREPELAAVLARAIRDFNPALRAVGLAGGCFIDACRAEGLEVWQEGFADRGYRADGSLVPRGLPGALLQDDSAMLAQAEDMALRQTVAAVNGLRIPARVDTLCLHGDGEHALRFARLLRERLEALGVEICAD.

It belongs to the LamB/PxpA family. As to quaternary structure, forms a complex composed of PxpA, PxpB and PxpC.

It carries out the reaction 5-oxo-L-proline + ATP + 2 H2O = L-glutamate + ADP + phosphate + H(+). Functionally, catalyzes the cleavage of 5-oxoproline to form L-glutamate coupled to the hydrolysis of ATP to ADP and inorganic phosphate. The polypeptide is 5-oxoprolinase subunit A (Chromobacterium violaceum (strain ATCC 12472 / DSM 30191 / JCM 1249 / CCUG 213 / NBRC 12614 / NCIMB 9131 / NCTC 9757 / MK)).